We begin with the raw amino-acid sequence, 406 residues long: Leucine aminopeptidase 1 (406 aa).

Residues 1–18 (MKVTNASLLALLLPAVSG) form the signal peptide. A propeptide spanning residues 19–94 (RFVETGEPDR…LRAMTASRKK (76 aa)) is cleaved from the precursor. Asn-186 carries N-linked (GlcNAc...) asparagine glycosylation. Zn(2+)-binding residues include His-194, Asp-213, Glu-252, and Asp-279. An N-linked (GlcNAc...) asparagine glycan is attached at Asn-306. The cysteines at positions 328 and 332 are disulfide-linked. His-361 is a Zn(2+) binding site.

Belongs to the peptidase M28 family. M28E subfamily. As to quaternary structure, monomer. Requires Zn(2+) as cofactor.

The protein localises to the secreted. Extracellular aminopeptidase that allows assimilation of proteinaceous substrates. This Chaetomium globosum (strain ATCC 6205 / CBS 148.51 / DSM 1962 / NBRC 6347 / NRRL 1970) (Soil fungus) protein is Leucine aminopeptidase 1 (LAP1).